The following is a 604-amino-acid chain: Afamin (604 aa).

The first 21 residues, 1 to 21 (MKQLKLTGFVIFFFFLTESLT), serve as a signal peptide directing secretion. 3 Albumin domains span residues 22-210 (LPTQ…EPFI), 211-403 (YYLK…RFNE), and 404-598 (TTEK…PKLA). Intrachain disulfides connect cysteine 77-cysteine 86, cysteine 99-cysteine 114, cysteine 113-cysteine 124, cysteine 148-cysteine 193, cysteine 192-cysteine 201, cysteine 224-cysteine 270, cysteine 269-cysteine 277, cysteine 289-cysteine 303, cysteine 302-cysteine 313, cysteine 340-cysteine 385, cysteine 384-cysteine 393, cysteine 416-cysteine 462, cysteine 461-cysteine 470, cysteine 483-cysteine 499, cysteine 498-cysteine 509, cysteine 536-cysteine 581, and cysteine 580-cysteine 589. N-linked (GlcNAc...) asparagine glycosylation is present at asparagine 109. Residues 215 to 319 (ALSSYQKNAC…RGECIIYSNK (105 aa)) are binding pocket for hydrophobic ligands. Asparagine 434 carries N-linked (GlcNAc...) asparagine glycosylation.

It belongs to the ALB/AFP/VDB family. Forms a 1:1 complex with Wnt family members; interacts with WNT3A and WNT5A. Interacts with WNT1, WNT2B, WNT3, WNT7A, WNT7B, WNT8, WNT9A, WNT9B, WNT10A and WNT10B. N-glycosylated; more than 90% of the glycans are sialylated.

Its subcellular location is the secreted. Functions as a carrier for hydrophobic molecules in body fluids. Essential for the solubility and activity of lipidated Wnt family members, including WNT1, WNT2B, WNT3, WNT3A, WNT5A, WNT7A, WNT7B, WNT8, WNT9A, WNT9B, WNT10A and WNT10B. Binds vitamin E. May transport vitamin E in body fluids under conditions where the lipoprotein system is not sufficient. May be involved in the transport of vitamin E across the blood-brain barrier. In Bos taurus (Bovine), this protein is Afamin (AFM).